Here is a 1108-residue protein sequence, read N- to C-terminus: MTNTKYYPEVSSNADFATIEKEILKFWQDNNIFQKSIDIREGDAEFIFYDGPPFANGLPHYGHLLTGFIKDVYARYQTVRGKKVERRFGWDCHGLPAEMQSEKELGISGHLAITNFGIEKFNAHCRDSVMKYAGEWEQYVTRQARWVDFKNSYKTMDKNFMESVLWAFKELYNKGLLYESMRVMPYSWACETPLSNFETRLDNSYRERADKAVTVSFVLCHPVSKSTLDVIPWLDHGIQKTINNDSANCSMDPVDKPRYDTENFLGITANYKEYRILAWTTTTWTLPSNLALAVGSDIDYALVPKGDVCYIIAASSVSKYAKELELKGDEQFTIIKGSELQGLSYKPLFDYFKNHPNSFKIFAGDFVVEGDGTGVVHMAPGFGEDDQILCESKGIKLVCPVDNSGKFTKEIPDLEGLQVFDANDKIIIKLKEQGNWLKTEQYIHNYPHCWRTDTPLIYKAVPSWYVKVTEFKDRMVELNQQINWIPTHVKDNLFGKWLENARDWSISRNRFWGTPLPVWKSDDPKYPRIDVYGSIEELEKDFGVKITDLHRPFIDELTRANPDDPTGKSTMRRIEDVFDCWFESGSMPYGQAHYPFENKQWFEEHFPADFIVEYSAQTRGWFYTLMVLSTALFDRPPFLNCICHGVILDATGQKLSKRLNNYADPLELFDKYGSDALRVTMLSSNVVKGQELLIDKDGKMVFDTLRLFIKPIWNAYHFFTMYVNADHIKGELNFTSENVLDVYILSKLKIAVEKIKESLDSFDTGTAYHAVSEFFEVLNNWYIRRSRARFWKSEKDADKQSAYNTLYTCLETMAIAMSSLVPLISEAIYLGLYCHPRKSGDPEKPECLDSRLCGNDNLSVHLCDYPDLSKFKINSELVDTMDTVLDICSHSLFIRSSENARVRQPLSSITIISKNNDKLKSFEDLIKDEINVKSVIYRDDLENYAVKKLSINFPLLGKRLPAKMKDIIAASKKNEWEVTSGSLIICNETLNSDEYKLILEPHSHIKGASSFAHNSSLLILDLELTPELIDEGIARDIVRFIQQARKNADFAITDRILIDINLPKITDIYGEFIKEQTLGEFAKDFIPDHISEIELDNHKLQLKIKKVN.

The 'HIGH' region motif lies at 53–63 (PFANGLPHYGH). The short motif at 654 to 658 (KLSKR) is the 'KMSKS' region element. Lys-657 contributes to the ATP binding site.

This sequence belongs to the class-I aminoacyl-tRNA synthetase family. IleS type 2 subfamily. Monomer. Requires Zn(2+) as cofactor.

It is found in the cytoplasm. It carries out the reaction tRNA(Ile) + L-isoleucine + ATP = L-isoleucyl-tRNA(Ile) + AMP + diphosphate. In terms of biological role, catalyzes the attachment of isoleucine to tRNA(Ile). As IleRS can inadvertently accommodate and process structurally similar amino acids such as valine, to avoid such errors it has two additional distinct tRNA(Ile)-dependent editing activities. One activity is designated as 'pretransfer' editing and involves the hydrolysis of activated Val-AMP. The other activity is designated 'posttransfer' editing and involves deacylation of mischarged Val-tRNA(Ile). This Rickettsia bellii (strain RML369-C) protein is Isoleucine--tRNA ligase.